Consider the following 350-residue polypeptide: Membrane progestin receptor alpha (350 aa).

Residues M1–H80 lie on the Cytoplasmic side of the membrane. Residues L81–W101 form a helical membrane-spanning segment. Topologically, residues G102–H105 are extracellular. A helical transmembrane segment spans residues A106 to A126. Over H127–S139 the chain is Cytoplasmic. The chain crosses the membrane as a helical span at residues F140 to F160. The Extracellular portion of the chain corresponds to Y161–E165. Residues P166–L186 form a helical membrane-spanning segment. The Cytoplasmic portion of the chain corresponds to S187 to A239. The helical transmembrane segment at L240–F260 threads the bilayer. At M261–Q278 the chain is on the extracellular side. The chain crosses the membrane as a helical span at residues L279–Y299. Residues E300 to S318 are Cytoplasmic-facing. The helical transmembrane segment at G319–V339 threads the bilayer. The Extracellular portion of the chain corresponds to R340–Q350.

Belongs to the ADIPOR family.

It is found in the cell membrane. Functionally, plasma membrane progesterone (P4) receptor coupled to G proteins. Seems to act through a G(i) mediated pathway. May be involved in oocyte maturation. Involved in neurosteroid inhibition of apoptosis. Also binds dehydroepiandrosterone (DHEA), pregnanolone, pregnenolone and allopregnanolone. This chain is Membrane progestin receptor alpha (PAQR7), found in Sus scrofa (Pig).